A 93-amino-acid polypeptide reads, in one-letter code: Putative sodium channel toxin Ts41 (93 aa).

The signal sequence occupies residues 1-23 (MKIGVLFTIISMLCLLEVRKICS). 4 cysteine pairs are disulfide-bonded: Cys22–Cys87, Cys39–Cys62, Cys48–Cys67, and Cys52–Cys69. One can recognise an LCN-type CS-alpha/beta domain in the interval 26-88 (EGGYPRYFSF…FWNVYRKYCK (63 aa)).

The protein belongs to the long (4 C-C) scorpion toxin superfamily. As to expression, expressed by the venom gland.

Its subcellular location is the secreted. In terms of biological role, the edited BmKBTx-like may modulate voltage-gated sodium channels (Nav). Functionally, the non-edited form is able to form a heterodimer. In orthologs, a heterodimer with LVP beta-chain induces lipolysis in rat adipocytes, which is mediated through the beta-2 adrenergic receptor pathway (ADRB2). Since no LVP beta-chains have been identified in the venom of this scorpion, it is possible that this protein is not involved in a lipolysis process. In Tityus serrulatus (Brazilian scorpion), this protein is Putative sodium channel toxin Ts41.